Here is a 311-residue protein sequence, read N- to C-terminus: 4-diphosphocytidyl-2-C-methyl-D-erythritol kinase (311 aa).

The active site involves Lys16. 100–110 (PIGAGLAGGSS) serves as a coordination point for ATP. The active site involves Asp142.

This sequence belongs to the GHMP kinase family. IspE subfamily.

The catalysed reaction is 4-CDP-2-C-methyl-D-erythritol + ATP = 4-CDP-2-C-methyl-D-erythritol 2-phosphate + ADP + H(+). Its pathway is isoprenoid biosynthesis; isopentenyl diphosphate biosynthesis via DXP pathway; isopentenyl diphosphate from 1-deoxy-D-xylulose 5-phosphate: step 3/6. Its function is as follows. Catalyzes the phosphorylation of the position 2 hydroxy group of 4-diphosphocytidyl-2C-methyl-D-erythritol. This is 4-diphosphocytidyl-2-C-methyl-D-erythritol kinase from Prochlorococcus marinus (strain MIT 9312).